A 687-amino-acid chain; its full sequence is uncharacterized protein (687 aa).

14 helical membrane-spanning segments follow: residues 28–48, 66–86, 94–114, 126–146, 154–174, 182–202, 211–231, 243–263, 287–307, 320–340, 348–368, 378–398, 414–434, and 480–500; these read IIFT…TIVV, WAVT…GKLG, VLLG…LSQT, GVGA…VVPL, GVLG…GGWL, WAFW…ATAV, PVID…LIMA, SATI…FVWL, VLSF…PIYL, LRTL…GVLV, IFPV…SQMD, LYLV…VLIV, VTFF…ALFV, and LTQV…LALL.

The protein belongs to the major facilitator superfamily. TCR/Tet family.

The protein resides in the cell membrane. This is an uncharacterized protein from Mycobacterium tuberculosis (strain CDC 1551 / Oshkosh).